The primary structure comprises 595 residues: Aspartate--tRNA ligase (595 aa).

Glutamate 180 contributes to the L-aspartate binding site. Positions 204-207 (QLFK) are aspartate. Residue arginine 226 coordinates L-aspartate. ATP is bound by residues 226–228 (RDE) and glutamine 235. Residue histidine 454 coordinates L-aspartate. ATP is bound at residue glutamate 488. An L-aspartate-binding site is contributed by arginine 495. 540 to 543 (GLDR) provides a ligand contact to ATP.

The protein belongs to the class-II aminoacyl-tRNA synthetase family. Type 1 subfamily. In terms of assembly, homodimer.

The protein resides in the cytoplasm. The enzyme catalyses tRNA(Asp) + L-aspartate + ATP = L-aspartyl-tRNA(Asp) + AMP + diphosphate. Catalyzes the attachment of L-aspartate to tRNA(Asp) in a two-step reaction: L-aspartate is first activated by ATP to form Asp-AMP and then transferred to the acceptor end of tRNA(Asp). This is Aspartate--tRNA ligase from Clostridium acetobutylicum (strain ATCC 824 / DSM 792 / JCM 1419 / IAM 19013 / LMG 5710 / NBRC 13948 / NRRL B-527 / VKM B-1787 / 2291 / W).